The chain runs to 154 residues: Large ribosomal subunit protein uL22c (154 aa).

It belongs to the universal ribosomal protein uL22 family. As to quaternary structure, part of the 50S ribosomal subunit.

Its subcellular location is the plastid. The protein localises to the chloroplast. This protein binds specifically to 23S rRNA. Its function is as follows. The globular domain of the protein is located near the polypeptide exit tunnel on the outside of the subunit, while an extended beta-hairpin is found that lines the wall of the exit tunnel in the center of the 70S ribosome. This chain is Large ribosomal subunit protein uL22c (rpl22), found in Jasminum nudiflorum (Winter jasmine).